Reading from the N-terminus, the 505-residue chain is Lysine--tRNA ligase (505 aa).

Mg(2+) contacts are provided by glutamate 415 and glutamate 422.

It belongs to the class-II aminoacyl-tRNA synthetase family. In terms of assembly, homodimer. The cofactor is Mg(2+).

The protein localises to the cytoplasm. The enzyme catalyses tRNA(Lys) + L-lysine + ATP = L-lysyl-tRNA(Lys) + AMP + diphosphate. In Edwardsiella ictaluri (strain 93-146), this protein is Lysine--tRNA ligase.